The primary structure comprises 663 residues: RING finger protein 145 (663 aa).

Transmembrane regions (helical) follow at residues 53–73 (YLAL…LTLP), 77–97 (LVQL…HQIS), 123–143 (FTTA…VMKT), 146–166 (IWLF…VPLE), 168–188 (IVII…YFLG), 205–222 (LVQV…MSLW), 225–245 (LVVP…QIYS), 275–295 (YSLL…LTLC), 316–336 (TEGV…LQVV), 340–360 (FLLS…MLEI), 384–404 (SLCL…CQFF), 410–430 (LLII…TLFI), 460–480 (LLEF…TIFG), and 482–502 (WTVM…WLRA). Residues 81–84 (YLYF) carry the YLYF motif motif. C537 is an active-site residue. The segment at 537–575 (CAICYQDMKSAVITPCSHFFHAGCLKKWLYVQDTCPLCH) adopts an RING-type; atypical zinc-finger fold. The disordered stretch occupies residues 587 to 663 (LGTEAAPQPP…EGEVCPVESA (77 aa)). The segment covering 619–628 (GTGTQEGSGD) has biased composition (polar residues).

As to quaternary structure, interacts (via YLYF motif) with INSIG1 and INSIG2.

The protein localises to the endoplasmic reticulum membrane. It catalyses the reaction S-ubiquitinyl-[E2 ubiquitin-conjugating enzyme]-L-cysteine + [acceptor protein]-L-lysine = [E2 ubiquitin-conjugating enzyme]-L-cysteine + N(6)-ubiquitinyl-[acceptor protein]-L-lysine.. Its function is as follows. E3 ubiquitin ligase that catalyzes the direct transfer of ubiquitin from E2 ubiquitin-conjugating enzyme to a specific substrate. In response to bacterial infection, negatively regulates the phagocyte oxidative burst by controlling the turnover of the NADPH oxidase complex subunits. Promotes monoubiquitination of CYBA and 'Lys-48'-linked polyubiquitination and degradation of CYBB NADPH oxidase catalytic subunits, both essential for the generation of antimicrobial reactive oxygen species. Involved in the maintenance of cholesterol homeostasis. In response to high sterol concentrations ubiquitinates HMGCR, a rate-limiting enzyme in cholesterol biosynthesis, and targets it for degradation. The interaction with INSIG1 is required for this function. In addition, triggers ubiquitination of SCAP, likely inhibiting its transport to the Golgi apparatus and the subsequent processing/maturation of SREBPF2, ultimately down-regulating cholesterol biosynthesis. This chain is RING finger protein 145, found in Mus musculus (Mouse).